The primary structure comprises 306 residues: Pantothenate kinase (306 aa).

An ATP-binding site is contributed by 91–98 (GSVAVGKS).

Belongs to the prokaryotic pantothenate kinase family.

Its subcellular location is the cytoplasm. It carries out the reaction (R)-pantothenate + ATP = (R)-4'-phosphopantothenate + ADP + H(+). The protein operates within cofactor biosynthesis; coenzyme A biosynthesis; CoA from (R)-pantothenate: step 1/5. The protein is Pantothenate kinase of Streptococcus pneumoniae (strain Hungary19A-6).